A 699-amino-acid polypeptide reads, in one-letter code: Zinc finger protein 782 (699 aa).

A KRAB domain is found at 8–79 (VSFQDVTVEF…EKEKGFLSRN (72 aa)). Residues 75 to 95 (FLSRNSPEDSQPDEISEKSPE) form a disordered region. A C2H2-type 1; degenerate zinc finger spans residues 279–307 (CFCRITHKTLTGGKSFSQKSHIREHHRVH). A C2H2-type 2; degenerate zinc finger spans residues 316–332 (GKSFNRNSTLPVHQRTH). Residues 337–360 (YSDYHPCTETFSYQSTFSVHQKVH) form a C2H2-type 3; degenerate zinc finger. A C2H2-type 4; degenerate zinc finger spans residues 366–388 (YEYNECGKSCSMNSHLIWPQKSH). C2H2-type zinc fingers lie at residues 394-416 (YECP…QRTH), 422-444 (YKCD…QRTH), 450-472 (FECH…QRTH), 478-500 (FECN…RRTH), 506-528 (YKCD…HRTH), 534-556 (YKCN…HRIH), 562-584 (YKCN…HRTH), 590-612 (YQCE…QRTH), 618-640 (YECN…QRTH), 646-668 (YNCN…QRTH), and 674-696 (YKCD…QKAH).

This sequence belongs to the krueppel C2H2-type zinc-finger protein family.

It localises to the nucleus. Its function is as follows. May be involved in transcriptional regulation. The chain is Zinc finger protein 782 (ZNF782) from Homo sapiens (Human).